Consider the following 478-residue polypeptide: Glycogen synthase (478 aa).

K15 is an ADP-alpha-D-glucose binding site.

This sequence belongs to the glycosyltransferase 1 family. Bacterial/plant glycogen synthase subfamily.

The enzyme catalyses [(1-&gt;4)-alpha-D-glucosyl](n) + ADP-alpha-D-glucose = [(1-&gt;4)-alpha-D-glucosyl](n+1) + ADP + H(+). It participates in glycan biosynthesis; glycogen biosynthesis. In terms of biological role, synthesizes alpha-1,4-glucan chains using ADP-glucose. This chain is Glycogen synthase, found in Caldicellulosiruptor bescii (strain ATCC BAA-1888 / DSM 6725 / KCTC 15123 / Z-1320) (Anaerocellum thermophilum).